We begin with the raw amino-acid sequence, 334 residues long: Oligopeptide transport ATP-binding protein OppF (334 aa).

The ABC transporter domain occupies 12-265; that stretch reads LEIADLKVHF…PLHPYTRALM (254 aa). 57-64 contributes to the ATP binding site; that stretch reads GESGCGKS.

The protein belongs to the ABC transporter superfamily. As to quaternary structure, the complex is composed of two ATP-binding proteins (OppD and OppF), two transmembrane proteins (OppB and OppC) and a solute-binding protein (OppA or MppA).

Its subcellular location is the cell inner membrane. The catalysed reaction is a [peptide](out) + ATP + H2O = a [peptide](in) + ADP + phosphate + H(+). It catalyses the reaction L-alanyl-gamma-D-glutamyl-meso-2,6-diaminopimelate(out) + ATP + H2O = L-alanyl-gamma-D-glutamyl-meso-2,6-diaminopimelate(in) + ADP + phosphate + H(+). Functionally, part of the ABC transporter complex OppABCDF involved in the uptake of oligopeptides and of the ABC transporter complex MppA-OppBCDF involved in the uptake of the cell wall murein tripeptide L-alanyl-gamma-D-glutamyl-meso-diaminopimelate. Probably responsible for energy coupling to the transport system. Plays an important nutritional role and is involved in the recycling of cell wall peptides. This is Oligopeptide transport ATP-binding protein OppF (oppF) from Escherichia coli (strain K12).